Here is a 141-residue protein sequence, read N- to C-terminus: Hemoglobin subunit alpha (141 aa).

One can recognise a Globin domain in the interval 1-141; it reads VLSSKDKTNV…VSTVLTSKYR (141 aa). Phosphoserine is present on serine 3. N6-succinyllysine is present on lysine 7. Threonine 8 carries the post-translational modification Phosphothreonine. The residue at position 11 (lysine 11) is an N6-succinyllysine. At lysine 16 the chain carries N6-acetyllysine; alternate. Lysine 16 is modified (N6-succinyllysine; alternate). A Phosphotyrosine modification is found at tyrosine 24. Lysine 40 is modified (N6-succinyllysine). Residue serine 49 is modified to Phosphoserine. An O2-binding site is contributed by histidine 58. Histidine 87 is a heme b binding site. Serine 102 is modified (phosphoserine). Residue threonine 108 is modified to Phosphothreonine. Serine 124 is subject to Phosphoserine. Phosphothreonine is present on residues threonine 134 and threonine 137. At serine 138 the chain carries Phosphoserine.

The protein belongs to the globin family. Heterotetramer of two alpha chains and two beta chains. In terms of tissue distribution, red blood cells.

Functionally, involved in oxygen transport from the lung to the various peripheral tissues. Its function is as follows. Hemopressin acts as an antagonist peptide of the cannabinoid receptor CNR1. Hemopressin-binding efficiently blocks cannabinoid receptor CNR1 and subsequent signaling. The chain is Hemoglobin subunit alpha (HBA) from Camelus dromedarius (Dromedary).